The following is a 241-amino-acid chain: Beta-nerve growth factor (241 aa).

A signal peptide spans 1–18; it reads MSMLFYTLITAFLIGIQA. The propeptide occupies 19-121; the sequence is EPHSESNVPA…PFNRTHRSKR (103 aa). N-linked (GlcNAc...) asparagine glycosylation is found at N69 and N114. 3 disulfides stabilise this stretch: C136-C201, C179-C229, and C189-C231. Y173 and K209 together coordinate a 1-acyl-sn-glycero-3-phospho-(1D-myo-inositol). An a 1-acyl-sn-glycero-3-phospho-L-serine-binding site is contributed by K209.

It belongs to the NGF-beta family. As to quaternary structure, homodimer. The homodimer interacts with a single NTRK1 chain. The homodimer interacts with a single NGFR chain. The NGF dimer interacts with a single SORCS2 chain (via extracellular domain). The NGF precursor (proNGF) binds to a receptor complex formed by SORT1 and NGFR, which leads to NGF endocytosis. Both mature NGF and the immature NGF precursor (proNGF) interact with SORCS2 and with the heterodimer formed by SORCS2 and NGFR (via extracellular domains). The NGF precursor (proNGF) has much higher affinity for SORCS2 than mature NGF. The NGF precursor (proNGF) has much higher affinity for SORT1 than mature NGF. Interacts with ADAM10 in a divalent cation-dependent manner. Interaction with SORCS3.

The protein localises to the secreted. Its subcellular location is the endosome lumen. Its function is as follows. Nerve growth factor is important for the development and maintenance of the sympathetic and sensory nervous systems. Extracellular ligand for the NTRK1 and NGFR receptors, activates cellular signaling cascades to regulate neuronal proliferation, differentiation and survival. The immature NGF precursor (proNGF) functions as a ligand for the heterodimeric receptor formed by SORCS2 and NGFR, and activates cellular signaling cascades that lead to inactivation of RAC1 and/or RAC2, reorganization of the actin cytoskeleton and neuronal growth cone collapse. In contrast to mature NGF, the precursor form (proNGF) promotes neuronal apoptosis (in vitro). Inhibits metalloproteinase-dependent proteolysis of platelet glycoprotein VI. Binds lysophosphatidylinositol and lysophosphatidylserine between the two chains of the homodimer. The lipid-bound form promotes histamine relase from mast cells, contrary to the lipid-free form. The polypeptide is Beta-nerve growth factor (NGF) (Homo sapiens (Human)).